Reading from the N-terminus, the 83-residue chain is uncharacterized protein (83 aa).

The next 3 helical transmembrane spans lie at 7–26 (FARF…IVSY), 36–58 (LSPL…ILPF), and 65–82 (ILTV…YLAF).

The protein resides in the cell membrane. This is an uncharacterized protein from Archaeoglobus fulgidus (strain ATCC 49558 / DSM 4304 / JCM 9628 / NBRC 100126 / VC-16).